A 207-amino-acid polypeptide reads, in one-letter code: LexA repressor (207 aa).

The segment at residues 28-48 (VREIGEAVGLASSSTVHGHLA) is a DNA-binding region (H-T-H motif). Active-site for autocatalytic cleavage activity residues include Ser129 and Lys167.

The protein belongs to the peptidase S24 family. Homodimer.

The catalysed reaction is Hydrolysis of Ala-|-Gly bond in repressor LexA.. In terms of biological role, represses a number of genes involved in the response to DNA damage (SOS response), including recA and lexA. In the presence of single-stranded DNA, RecA interacts with LexA causing an autocatalytic cleavage which disrupts the DNA-binding part of LexA, leading to derepression of the SOS regulon and eventually DNA repair. The protein is LexA repressor of Geobacillus sp. (strain WCH70).